We begin with the raw amino-acid sequence, 255 residues long: Proteasome subunit alpha 2 (255 aa).

Residues 229–255 (AGSSLEEMLPTPAATEDAPPANGDAPS) are disordered. Residues 238–249 (PTPAATEDAPPA) are compositionally biased toward low complexity.

The protein belongs to the peptidase T1A family. The 20S proteasome core is composed of 14 alpha and 14 beta subunits that assemble into four stacked heptameric rings, resulting in a barrel-shaped structure. The two inner rings, each composed of seven catalytic beta subunits, are sandwiched by two outer rings, each composed of seven alpha subunits. All four combinations of alpha- and beta-subunits (beta2-alpha1, beta2-alpha2, beta1-alpha2 and beta1-alpha1) yield fully assembled and proteolytically active proteasomes. The catalytic chamber with the active sites is on the inside of the barrel. Has probably a gated structure, the ends of the cylinder being occluded by the N-termini of the alpha-subunits. Is likely capped by the proteasome-associated ATPase, ARC. The N-terminus is blocked.

The protein localises to the cytoplasm. It functions in the pathway protein degradation; proteasomal Pup-dependent pathway. With respect to regulation, the formation of the proteasomal ATPase ARC-20S proteasome complex, likely via the docking of the C-termini of ARC into the intersubunit pockets in the alpha-rings, may trigger opening of the gate for substrate entry. Interconversion between the open-gate and close-gate conformations leads to a dynamic regulation of the 20S proteasome proteolysis activity. Component of the proteasome core, a large protease complex with broad specificity involved in protein degradation. The R.erythropolis proteasomes are able to cleave oligopeptides after Tyr, Phe and Leu, very poorly after Arg but not after Glu. Thus, displays chymotrypsin-like activity, low trypsin-like activity but no caspase-like activity. This Rhodococcus erythropolis (Arthrobacter picolinophilus) protein is Proteasome subunit alpha 2.